The following is a 323-amino-acid chain: ADP/ATP translocase 4 (323 aa).

Topologically, residues 1–23 (MQREPPKRKQEKKVEKGLFDATS) are mitochondrial intermembrane. One copy of the Solcar 1 repeat lies at 22 to 114 (TSFGKDLLAG…FAFKDKYKQL (93 aa)). Residues 24–53 (FGKDLLAGGVAAAVSKTTVAPIERVKLLLQ) traverse the membrane as a helical segment. Over 54–90 (VQASSKQISPEAQYKGIVDCLVRIPREQGFLSYWRGN) the chain is Mitochondrial matrix. The helical transmembrane segment at 91–115 (LANVIRYFPTQALNFAFKDKYKQLF) threads the bilayer. Residues arginine 96 and lysine 108 each contribute to the ADP site. Residues 116–125 (MSGVNKEKQF) are Mitochondrial intermembrane-facing. The helical transmembrane segment at 126-146 (WRWFLANLASGGAAGATSLCV) threads the bilayer. 2 Solcar repeats span residues 127-217 (RWFL…VKGL) and 224-311 (THFL…IKDL). Residues 147–194 (VYPLDFARTRLGADIGKGPEERQFKGLGDCIMKIAKSDGIVGLYQGFG) lie on the Mitochondrial matrix side of the membrane. A helical transmembrane segment spans residues 195–215 (VSVQGIIVYRASYFGAYDTVK). The Mitochondrial intermembrane segment spans residues 216-226 (GLLPKPKETHF). A helical membrane pass occupies residues 227-247 (LVSFFIAQVVTTCSGILSYPF). The Mitochondrial matrix segment spans residues 248–287 (DTVRRRMMMQSGEAERQYKGTLDCFMKIYQQEGIGAFFRG). ADP is bound at residue arginine 251. The important for transport activity stretch occupies residues 251–256 (RRRMMM). Positions 251–256 (RRRMMM) match the Nucleotide carrier signature motif motif. The helical transmembrane segment at 288–305 (AFSNILRGTGGALVLVLY) threads the bilayer. Topologically, residues 306–323 (DKIKDLLNIDIGGSSSGD) are mitochondrial intermembrane.

It belongs to the mitochondrial carrier (TC 2.A.29) family. Monomer.

The protein localises to the mitochondrion inner membrane. The protein resides in the membrane. It is found in the cell projection. It localises to the cilium. Its subcellular location is the flagellum membrane. It catalyses the reaction ADP(in) + ATP(out) = ADP(out) + ATP(in). It carries out the reaction dATP(out) + ADP(in) = dATP(in) + ADP(out). The enzyme catalyses dADP(in) + ADP(out) = dADP(out) + ADP(in). The catalysed reaction is H(+)(in) = H(+)(out). Its activity is regulated as follows. The matrix-open state (m-state) is inhibited by the membrane-permeable bongkrekic acid (BKA). The cytoplasmic-open state (c-state) is inhibited by the membrane-impermeable toxic inhibitor carboxyatractyloside (CATR). Proton transporter activity is inhibited by ADP:ATP antiporter activity. Its function is as follows. ADP:ATP antiporter that mediates import of ADP into the mitochondrial matrix for ATP synthesis, and export of ATP out to fuel the cell. Cycles between the cytoplasmic-open state (c-state) and the matrix-open state (m-state): operates by the alternating access mechanism with a single substrate-binding site intermittently exposed to either the cytosolic (c-state) or matrix (m-state) side of the inner mitochondrial membrane. Specifically required during spermatogenesis, probably to mediate ADP:ATP exchange in spermatocytes. Large ATP supplies from mitochondria may be critical for normal progression of spermatogenesis during early stages of meiotic prophase I, including DNA double-strand break repair and chromosomal synapsis. In addition to its ADP:ATP antiporter activity, also involved in mitochondrial uncoupling and mitochondrial permeability transition pore (mPTP) activity. Plays a role in mitochondrial uncoupling by acting as a proton transporter: proton transport uncouples the proton flows via the electron transport chain and ATP synthase to reduce the efficiency of ATP production and cause mitochondrial thermogenesis. Proton transporter activity is inhibited by ADP:ATP antiporter activity, suggesting that SLC25A31/ANT4 acts as a master regulator of mitochondrial energy output by maintaining a delicate balance between ATP production (ADP:ATP antiporter activity) and thermogenesis (proton transporter activity). Proton transporter activity requires free fatty acids as cofactor, but does not transport it. Among nucleotides, may also exchange ADP for dATP and dADP. Also plays a key role in mPTP opening, a non-specific pore that enables free passage of the mitochondrial membranes to solutes of up to 1.5 kDa, and which contributes to cell death. It is however unclear if SLC25A31/ANT4 constitutes a pore-forming component of mPTP or regulates it. The polypeptide is ADP/ATP translocase 4 (Bos taurus (Bovine)).